The sequence spans 118 residues: MAHNLALGAHGEDLAARYLTEAGMEIVDRNWRSRYGEVDLIAAEGDWLVFVEVKTRRGLGYGSPAEAVTFSKQRRIRLLAVEWLRDSGRHWSRVRFDVVAIMIGHGPQPQIEHVRDAF.

It belongs to the UPF0102 family.

The chain is UPF0102 protein RHA1_ro06551 from Rhodococcus jostii (strain RHA1).